The chain runs to 218 residues: Urease accessory protein UreG (218 aa).

22 to 29 is a binding site for GTP; sequence GPVGSGKT.

Belongs to the SIMIBI class G3E GTPase family. UreG subfamily. As to quaternary structure, homodimer. UreD, UreF and UreG form a complex that acts as a GTP-hydrolysis-dependent molecular chaperone, activating the urease apoprotein by helping to assemble the nickel containing metallocenter of UreC. The UreE protein probably delivers the nickel.

The protein resides in the cytoplasm. Its function is as follows. Facilitates the functional incorporation of the urease nickel metallocenter. This process requires GTP hydrolysis, probably effectuated by UreG. The sequence is that of Urease accessory protein UreG from Polaromonas sp. (strain JS666 / ATCC BAA-500).